Here is a 478-residue protein sequence, read N- to C-terminus: Glutamate--tRNA ligase (478 aa).

Positions 15 to 25 match the 'HIGH' region motif; sequence PSPTGFLHIGG. The 'KMSKS' region motif lies at 244 to 248; that stretch reads KLSKR. ATP is bound at residue Lys247.

The protein belongs to the class-I aminoacyl-tRNA synthetase family. Glutamate--tRNA ligase type 1 subfamily. In terms of assembly, monomer.

The protein resides in the cytoplasm. It carries out the reaction tRNA(Glu) + L-glutamate + ATP = L-glutamyl-tRNA(Glu) + AMP + diphosphate. In terms of biological role, catalyzes the attachment of glutamate to tRNA(Glu) in a two-step reaction: glutamate is first activated by ATP to form Glu-AMP and then transferred to the acceptor end of tRNA(Glu). This is Glutamate--tRNA ligase from Bradyrhizobium sp. (strain ORS 278).